We begin with the raw amino-acid sequence, 1059 residues long: Mitogen-activated protein kinase kinase kinase mlk-1 (1059 aa).

The segment at 1 to 66 (MEQASVPSYV…ESSQVSRESP (66 aa)) is disordered. The span at 38 to 48 (DTTTASTSTDS) shows a compositional bias: low complexity. The region spanning 69-130 (RASKAFVASY…PSNYAREVTY (62 aa)) is the SH3 domain. The Protein kinase domain maps to 150–454 (TLSDCQIGHG…TLAISFKQYA (305 aa)). ATP is bound by residues 156-164 (IGHGATATV) and Lys193. Positions 199–224 (ASNFRADVVSTDEQLEQLKREANLVN) form a coiled coil. Residue Asp297 is the Proton acceptor of the active site. Ser355 bears the Phosphoserine; by max-2 and tpa-1 mark. 2 disordered regions span residues 617-699 (PVVS…QTTR) and 714-808 (RAQS…SSSD). Residues 623-633 (MDDSNTFSTID) show a composition bias toward polar residues. 2 stretches are compositionally biased toward basic and acidic residues: residues 639-648 (DPNHSKESKK) and 662-674 (NKRDSKEDHDERA). Positions 678–689 (SISSRSSSTTSS) are enriched in low complexity. Over residues 690–699 (NRLITGQTTR) the composition is skewed to polar residues. Over residues 749–759 (RYVKDLEKDTP) the composition is skewed to basic and acidic residues. Composition is skewed to polar residues over residues 774–790 (LDQTIPASPNSPDSINN) and 798–808 (SRRTTANSSSD). An NPQY motif motif is present at residues 937-940 (NPQY). Residue Tyr940 is modified to Phosphotyrosine.

This sequence belongs to the protein kinase superfamily. STE Ser/Thr protein kinase family. MAP kinase kinase kinase subfamily. Interacts with max-2; the interaction is independent of max-2 and mlk-1 kinase activities. May interact (via NPQY motif when phosphorylated on tyrosine residue) with shc-1 (via PID domain); the interaction may facilitate mek-1 phosphorylation by bringing mlk-1 and mek-1 together. Interacts with svh-2 (via cytoplasmic domain). Interacts with tpa-1. Mg(2+) is required as a cofactor. Post-translationally, may be phosphorylated on tyrosine residues by svh-2. May be ubiquitinated and targeted for proteasomal degradation by E3 ubiquitin ligase rpm-1. In terms of tissue distribution, expressed in pharynx, intestine, hypodermis, neurons and body muscles.

It carries out the reaction L-seryl-[protein] + ATP = O-phospho-L-seryl-[protein] + ADP + H(+). It catalyses the reaction L-threonyl-[protein] + ATP = O-phospho-L-threonyl-[protein] + ADP + H(+). Activated by phosphorylation at Ser-355. May be activated by svh-2-mediated phosphorylation. Functionally, serine/threonine-protein kinase which, by phosphorylating and activating mek-1, plays an important role in the activation of the JNK pathway composed of mlk-1, mek-1 and kgb-1. Involved in the response to environmental stress such as heavy metals. By activating the JNK pathway downstream of tyrosine receptor svh-2, plays a role in axon regeneration after injury. In Caenorhabditis elegans, this protein is Mitogen-activated protein kinase kinase kinase mlk-1.